A 373-amino-acid polypeptide reads, in one-letter code: Dual-specificity RNA methyltransferase RlmN (373 aa).

The active-site Proton acceptor is the Glu94. The region spanning 100 to 339 is the Radical SAM core domain; it reads EEDRATLCVS…VIVRKTRGDD (240 aa). Cys107 and Cys344 are disulfide-bonded. Residues Cys114, Cys118, and Cys121 each contribute to the [4Fe-4S] cluster site. S-adenosyl-L-methionine-binding positions include 168 to 169, Ser200, 222 to 224, and Asn301; these read GE and SIH. Cys344 serves as the catalytic S-methylcysteine intermediate.

This sequence belongs to the radical SAM superfamily. RlmN family. Requires [4Fe-4S] cluster as cofactor.

The protein localises to the cytoplasm. It catalyses the reaction adenosine(2503) in 23S rRNA + 2 reduced [2Fe-2S]-[ferredoxin] + 2 S-adenosyl-L-methionine = 2-methyladenosine(2503) in 23S rRNA + 5'-deoxyadenosine + L-methionine + 2 oxidized [2Fe-2S]-[ferredoxin] + S-adenosyl-L-homocysteine. The catalysed reaction is adenosine(37) in tRNA + 2 reduced [2Fe-2S]-[ferredoxin] + 2 S-adenosyl-L-methionine = 2-methyladenosine(37) in tRNA + 5'-deoxyadenosine + L-methionine + 2 oxidized [2Fe-2S]-[ferredoxin] + S-adenosyl-L-homocysteine. Specifically methylates position 2 of adenine 2503 in 23S rRNA and position 2 of adenine 37 in tRNAs. m2A2503 modification seems to play a crucial role in the proofreading step occurring at the peptidyl transferase center and thus would serve to optimize ribosomal fidelity. In Shewanella loihica (strain ATCC BAA-1088 / PV-4), this protein is Dual-specificity RNA methyltransferase RlmN.